We begin with the raw amino-acid sequence, 420 residues long: Putative FBD-associated F-box protein At1g78730 (420 aa).

Positions 21-71 (LDWLRKLPDSLLCQVFLNLPTKDVVKTSVLSSTWGNIWRSVPGLDLGYGDF) constitute an F-box domain. One can recognise an FBD domain in the interval 341 to 390 (ISILPGPQCNLPALEFVDILKPMVEKETELKLMSYFLEKSTILKKLTLRL).

The polypeptide is Putative FBD-associated F-box protein At1g78730 (Arabidopsis thaliana (Mouse-ear cress)).